The sequence spans 133 residues: Profilin (133 aa).

It belongs to the profilin family.

In terms of biological role, more likely to influence phosphoinositide metabolism than actin assembly. This Camelus protein is Profilin.